The following is a 132-amino-acid chain: Small ribosomal subunit protein uS8 (132 aa).

The protein belongs to the universal ribosomal protein uS8 family. As to quaternary structure, part of the 30S ribosomal subunit. Contacts proteins S5 and S12.

Its function is as follows. One of the primary rRNA binding proteins, it binds directly to 16S rRNA central domain where it helps coordinate assembly of the platform of the 30S subunit. This is Small ribosomal subunit protein uS8 from Rhizobium meliloti (strain 1021) (Ensifer meliloti).